Reading from the N-terminus, the 161-residue chain is S-ribosylhomocysteine lyase (161 aa).

Positions 57, 61, and 127 each coordinate Fe cation.

It belongs to the LuxS family. Homodimer. It depends on Fe cation as a cofactor.

It catalyses the reaction S-(5-deoxy-D-ribos-5-yl)-L-homocysteine = (S)-4,5-dihydroxypentane-2,3-dione + L-homocysteine. In terms of biological role, involved in the synthesis of autoinducer 2 (AI-2) which is secreted by bacteria and is used to communicate both the cell density and the metabolic potential of the environment. The regulation of gene expression in response to changes in cell density is called quorum sensing. Catalyzes the transformation of S-ribosylhomocysteine (RHC) to homocysteine (HC) and 4,5-dihydroxy-2,3-pentadione (DPD). This is S-ribosylhomocysteine lyase from Streptococcus equi subsp. zooepidemicus (strain H70).